We begin with the raw amino-acid sequence, 105 residues long: uncharacterized protein (105 aa).

The protein belongs to the EspC family.

In terms of biological role, may be involved in assembly of the ESX-1 / type VII specialized secretion system (T7SS), which exports several proteins including EsxA and EsxB. Involved in DNA conjugation, in at least recipient strain. This is an uncharacterized protein from Mycolicibacterium smegmatis (strain MKD8) (Mycobacterium smegmatis).